The following is a 61-amino-acid chain: MDTKLLDILACPVCKGPLKLSADKTELISKGAGLAYPVRDGIPVMLESEARTLSTDERLEK.

Belongs to the UPF0434 family.

In Pseudomonas savastanoi pv. phaseolicola (strain 1448A / Race 6) (Pseudomonas syringae pv. phaseolicola (strain 1448A / Race 6)), this protein is UPF0434 protein PSPPH_1629.